The sequence spans 126 residues: Regulatory protein MgsR (126 aa).

Cysteines 13 and 16 form a disulfide.

Belongs to the ArsC family.

It localises to the cytoplasm. Its activity is regulated as follows. Activity is controlled at multiple levels. Regulation includes a positive autoregulatory loop on mgsR transcription and a post-translational redox-sensitive activation step by an intramolecular disulfide bond formation in response to ethanol stress. In addition, protein stability is strictly controlled by rapid proteolytic degradation by the ClpXP and ClpCP proteases. The McsB protein-arginine kinase might serve as a proteolytic adapter for the ClpX ATPase in the degradation mechanism of MgsR. Its function is as follows. Regulates transcription of a subregulon within the general stress response. Exerts positive and negative effects in response to ethanol stress. In Bacillus subtilis (strain 168), this protein is Regulatory protein MgsR.